We begin with the raw amino-acid sequence, 145 residues long: Basic phospholipase A2 Vb-2 (145 aa).

Positions 1–19 are cleaved as a signal peptide; sequence MNPAHLLVLLAVCVSLLGA. The propeptide occupies 20-27; the sequence is ANIPPQPL. 7 disulfides stabilise this stretch: C38–C97, C52–C144, C54–C70, C69–C125, C76–C118, C86–C111, and C104–C116. Ca(2+) is bound by residues Y53, G55, and G57. The active site involves H73. D74 is a binding site for Ca(2+). D119 is an active-site residue.

Ca(2+) is required as a cofactor. Expressed by the venom gland.

The protein resides in the secreted. The enzyme catalyses a 1,2-diacyl-sn-glycero-3-phosphocholine + H2O = a 1-acyl-sn-glycero-3-phosphocholine + a fatty acid + H(+). Functionally, snake venom phospholipase A2 (PLA2) that has only a weak enzymatic activity. Inhibits neuromuscular transmission by blocking acetylcholine release from the nerve termini. PLA2 catalyzes the calcium-dependent hydrolysis of the 2-acyl groups in 3-sn-phosphoglycerides. This chain is Basic phospholipase A2 Vb-2, found in Bungarus fasciatus (Banded krait).